A 317-amino-acid chain; its full sequence is Long form salivary protein D7L2 (317 aa).

Positions 1 to 20 (MYKLLVALHLILCTVSHVKT) are cleaved as a signal peptide. Cystine bridges form between Cys-39–Cys-76, Cys-72–Cys-131, Cys-181–Cys-214, Cys-195–Cys-316, and Cys-255–Cys-266. Thromboxane A2-binding residues include Trp-58 and Tyr-73. Residues Glu-182, Tyr-264, Asp-281, Asp-284, and Met-308 each contribute to the serotonin site.

Belongs to the PBP/GOBP family. In terms of tissue distribution, female salivary gland.

It localises to the secreted. Modulates blood feeding of female mosquitoes on vertebrate species by binding and sequestering different mediators involved in the host response, such as biogenic amines and eicosanoids. Binds serotonin with high affinity. Binds tryptamine, octopamine, dopamine and noradrenaline with low affinity. Binds leukotriene C4, leukotriene D4, leukotriene E4 and U-46619, a stable analog of thromboxane A2. Does not bind leukotriene B4, adrenaline, histamine and ADP. Inhibits platelet aggregation induced by low concentrations of collagen and arachidonic acid but not by ADP or adrenaline. This chain is Long form salivary protein D7L2, found in Anopheles darlingi (Mosquito).